A 969-amino-acid polypeptide reads, in one-letter code: Glycine dehydrogenase (decarboxylating) (969 aa).

Position 716 is an N6-(pyridoxal phosphate)lysine (Lys716).

Belongs to the GcvP family. The glycine cleavage system is composed of four proteins: P, T, L and H. Pyridoxal 5'-phosphate serves as cofactor.

The enzyme catalyses N(6)-[(R)-lipoyl]-L-lysyl-[glycine-cleavage complex H protein] + glycine + H(+) = N(6)-[(R)-S(8)-aminomethyldihydrolipoyl]-L-lysyl-[glycine-cleavage complex H protein] + CO2. The glycine cleavage system catalyzes the degradation of glycine. The P protein binds the alpha-amino group of glycine through its pyridoxal phosphate cofactor; CO(2) is released and the remaining methylamine moiety is then transferred to the lipoamide cofactor of the H protein. This is Glycine dehydrogenase (decarboxylating) from Shewanella woodyi (strain ATCC 51908 / MS32).